The sequence spans 911 residues: Isoleucine--tRNA ligase (911 aa).

Positions 57–67 (PYANGHIHIGH) match the 'HIGH' region motif. Residue glutamate 564 participates in L-isoleucyl-5'-AMP binding. A 'KMSKS' region motif is present at residues 605–609 (KMSKS). Lysine 608 lines the ATP pocket. Residues cysteine 887, cysteine 890, cysteine 902, and cysteine 905 each coordinate Zn(2+).

It belongs to the class-I aminoacyl-tRNA synthetase family. IleS type 1 subfamily. In terms of assembly, monomer. Requires Zn(2+) as cofactor.

The protein resides in the cytoplasm. The enzyme catalyses tRNA(Ile) + L-isoleucine + ATP = L-isoleucyl-tRNA(Ile) + AMP + diphosphate. In terms of biological role, catalyzes the attachment of isoleucine to tRNA(Ile). As IleRS can inadvertently accommodate and process structurally similar amino acids such as valine, to avoid such errors it has two additional distinct tRNA(Ile)-dependent editing activities. One activity is designated as 'pretransfer' editing and involves the hydrolysis of activated Val-AMP. The other activity is designated 'posttransfer' editing and involves deacylation of mischarged Val-tRNA(Ile). The polypeptide is Isoleucine--tRNA ligase (Nautilia profundicola (strain ATCC BAA-1463 / DSM 18972 / AmH)).